Here is a 437-residue protein sequence, read N- to C-terminus: Glutamate-1-semialdehyde 2,1-aminomutase (437 aa).

K273 carries the post-translational modification N6-(pyridoxal phosphate)lysine.

The protein belongs to the class-III pyridoxal-phosphate-dependent aminotransferase family. HemL subfamily. In terms of assembly, homodimer. Pyridoxal 5'-phosphate serves as cofactor.

Its subcellular location is the cytoplasm. The enzyme catalyses (S)-4-amino-5-oxopentanoate = 5-aminolevulinate. It participates in porphyrin-containing compound metabolism; protoporphyrin-IX biosynthesis; 5-aminolevulinate from L-glutamyl-tRNA(Glu): step 2/2. The sequence is that of Glutamate-1-semialdehyde 2,1-aminomutase from Chlamydia abortus (strain DSM 27085 / S26/3) (Chlamydophila abortus).